Consider the following 218-residue polypeptide: uncharacterized protein (218 aa).

The protein belongs to the glycosyltransferase 2 family.

This is an uncharacterized protein from Mycobacterium bovis (strain ATCC BAA-935 / AF2122/97).